Here is a 315-residue protein sequence, read N- to C-terminus: MAVMNELKIVFMGSPEFALTPLKMLLAEGYDICGVYTQPDRPAGRGRELCPPPVKTLALEHGLAVYQPQSLKKPEEQAFLKELKPDVIVVAAYGLILPQAVLDIPVYGVLNIHPSLLPRYRGATPVAATLLGGDEWAGVSLMKLEAGLDTGPVYSRSMVAIRPEDTTPILADKLAFIGGCMLLELLSQIPSLPEPQVQDNTQASYFGMVTKEMGLINWQTSAVEIERRVRAFFPWPGVFTTFNQKTLKILEAKPRNLGLGLKPSEVRVYEQSRVMVGSASGELEIIRLQLEGKAGCSAADFVRGQRNFDGVNLGV.

115-118 contacts (6S)-5,6,7,8-tetrahydrofolate; sequence SLLP.

The protein belongs to the Fmt family.

The catalysed reaction is L-methionyl-tRNA(fMet) + (6R)-10-formyltetrahydrofolate = N-formyl-L-methionyl-tRNA(fMet) + (6S)-5,6,7,8-tetrahydrofolate + H(+). Its function is as follows. Attaches a formyl group to the free amino group of methionyl-tRNA(fMet). The formyl group appears to play a dual role in the initiator identity of N-formylmethionyl-tRNA by promoting its recognition by IF2 and preventing the misappropriation of this tRNA by the elongation apparatus. This Dehalococcoides mccartyi (strain ATCC BAA-2100 / JCM 16839 / KCTC 5957 / BAV1) protein is Methionyl-tRNA formyltransferase.